Here is a 360-residue protein sequence, read N- to C-terminus: RNA demethylase ALKBH5 (360 aa).

The interval methionine 1–valine 53 is disordered. Basic and acidic residues predominate over residues aspartate 7–glutamate 22. The segment covering aspartate 32 to glutamate 48 has biased composition (acidic residues). Residue tyrosine 107 is part of the active site. 2-oxoglutarate-binding residues include asparagine 161, tyrosine 163, histidine 172, histidine 234, and arginine 245. Residues cysteine 198 and cysteine 235 are joined by a disulfide bond. Residues glutamate 261 to histidine 360 are disordered. Residues serine 264–glutamine 280 show a composition bias toward polar residues. Positions histidine 281 to arginine 290 are enriched in basic residues. 2 stretches are compositionally biased toward basic and acidic residues: residues lysine 291–arginine 312 and tyrosine 330–threonine 340.

Belongs to the alkB family. Monomer. Fe(2+) is required as a cofactor.

It is found in the nucleus speckle. It catalyses the reaction an N(6)-methyladenosine in mRNA + 2-oxoglutarate + O2 = an adenosine in mRNA + formaldehyde + succinate + CO2. Functionally, dioxygenase that specifically demethylates N(6)-methyladenosine (m6A) RNA, the most prevalent internal modification of messenger RNA (mRNA) in higher eukaryotes. Demethylates RNA by oxidative demethylation, which requires molecular oxygen, alpha-ketoglutarate and iron. Demethylation of m6A mRNA affects mRNA processing, translation and export. The polypeptide is RNA demethylase ALKBH5 (alkbh5) (Xenopus laevis (African clawed frog)).